A 362-amino-acid polypeptide reads, in one-letter code: Peptide chain release factor 1 (362 aa).

Q235 carries the N5-methylglutamine modification.

Belongs to the prokaryotic/mitochondrial release factor family. Methylated by PrmC. Methylation increases the termination efficiency of RF1.

It localises to the cytoplasm. Its function is as follows. Peptide chain release factor 1 directs the termination of translation in response to the peptide chain termination codons UAG and UAA. This Acinetobacter baylyi (strain ATCC 33305 / BD413 / ADP1) protein is Peptide chain release factor 1.